The primary structure comprises 176 residues: Endoribonuclease YbeY (176 aa).

Positions 139, 143, and 149 each coordinate Zn(2+).

This sequence belongs to the endoribonuclease YbeY family. Requires Zn(2+) as cofactor.

The protein resides in the cytoplasm. Functionally, single strand-specific metallo-endoribonuclease involved in late-stage 70S ribosome quality control and in maturation of the 3' terminus of the 16S rRNA. The protein is Endoribonuclease YbeY of Acaryochloris marina (strain MBIC 11017).